The sequence spans 417 residues: Synaptic vesicle membrane protein VAT-1 homolog-like (417 aa).

2 disordered regions span residues 1–33 and 382–417; these read MAKEGVEKAEETEQMIEKETSKEPAEGGDGSHR and PTPLMANDSTETSEAGEEEEDHEGDSENKERMPFIQ. Phosphoserine is present on Ser390. Residues Thr391 and Thr393 each carry the phosphothreonine modification. Phosphoserine is present on Ser394. Over residues 395–405 the composition is skewed to acidic residues; sequence EAGEEEEDHEG. Residues 406–417 show a composition bias toward basic and acidic residues; that stretch reads DSENKERMPFIQ.

Belongs to the zinc-containing alcohol dehydrogenase family. Quinone oxidoreductase subfamily.

This Mus musculus (Mouse) protein is Synaptic vesicle membrane protein VAT-1 homolog-like (Vat1l).